The primary structure comprises 421 residues: Protein FAM110C (421 aa).

Disordered regions lie at residues 1-36 (MRALPTLDSLARMRPPLGDPRAAEDTLTPRPANKSA), 51-80 (TLGSSRGPVSEHRVPEAPGVQHRNPIPSAL), and 141-266 (TTRV…PASM). Composition is skewed to basic and acidic residues over residues 143–155 (RVADEDKTTKETE), 185–202 (PAEKTRVANEDKTTKETE), and 232–249 (PAEKTRVANEDKTTKETE). The residue at position 350 (Ser350) is a Phosphoserine.

This sequence belongs to the FAM110 family. In terms of assembly, interacts with AKT1; the interaction is transient and follows AKT1 activation. Interacts with PPP2CA and alpha-tubulin.

It localises to the cytoplasm. The protein localises to the cytoskeleton. The protein resides in the microtubule organizing center. Its subcellular location is the centrosome. It is found in the spindle pole. It localises to the nucleus. Its function is as follows. May play a role in microtubule organization. May play a role in cell spreading and cell migration of epithelial cells; the function may involve the AKT1 signaling pathway. In Mus musculus (Mouse), this protein is Protein FAM110C (Fam110c).